The sequence spans 244 residues: Lectin (244 aa).

The interval 1-20 (TETETTSFSIPKTDQPSSPK) is disordered.

Belongs to the leguminous lectin family. Homodimer. In contrast to other Lathyrus lectins which are tetramer of two alpha and two beta chains.

This Lathyrus sphaericus (Spring vetchling) protein is Lectin.